Reading from the N-terminus, the 417-residue chain is Phosphoglycerate kinase (417 aa).

Residues 24–26, Arg44, 67–70, Arg126, and Arg170 contribute to the substrate site; these read DLN and HLGR. Residues Lys220, Gly316, Glu347, and 373-376 contribute to the ATP site; that span reads GGDS.

It belongs to the phosphoglycerate kinase family. As to quaternary structure, monomer.

It is found in the cytoplasm. It carries out the reaction (2R)-3-phosphoglycerate + ATP = (2R)-3-phospho-glyceroyl phosphate + ADP. It functions in the pathway carbohydrate degradation; glycolysis; pyruvate from D-glyceraldehyde 3-phosphate: step 2/5. The chain is Phosphoglycerate kinase from Renibacterium salmoninarum (strain ATCC 33209 / DSM 20767 / JCM 11484 / NBRC 15589 / NCIMB 2235).